We begin with the raw amino-acid sequence, 545 residues long: Protein disulfide isomerase-like 1-3 (545 aa).

Pro residues predominate over residues 1–16 (MWPRAPATPPPPPWPS). Residues 1–24 (MWPRAPATPPPPPWPSKPSAASRS) form a disordered region. The region spanning 55-189 (ASSTAFAAAF…IVAYLKRQAG (135 aa)) is the Thioredoxin 1 domain. N-linked (GlcNAc...) asparagine glycosylation occurs at Asn-87. Residues Cys-107 and Cys-110 each act as nucleophile in the active site. Cys-107 and Cys-110 are oxidised to a cystine. Asn-349 is a glycosylation site (N-linked (GlcNAc...) asparagine). Residues 403 to 545 (FTEGTLAPHV…TTTESVKDEL (143 aa)) enclose the Thioredoxin 2 domain. Active-site nucleophile residues include Cys-453 and Cys-456. Cysteines 453 and 456 form a disulfide. The Prevents secretion from ER signature appears at 542–545 (KDEL).

It belongs to the protein disulfide isomerase family.

It localises to the endoplasmic reticulum lumen. The catalysed reaction is Catalyzes the rearrangement of -S-S- bonds in proteins.. Its function is as follows. Acts as a protein-folding catalyst that interacts with nascent polypeptides to catalyze the formation, isomerization, and reduction or oxidation of disulfide bonds. May play a role in storage protein biogenesis. The chain is Protein disulfide isomerase-like 1-3 (PDIL1-3) from Oryza sativa subsp. japonica (Rice).